We begin with the raw amino-acid sequence, 106 residues long: A-type ATP synthase subunit F (106 aa).

Belongs to the V-ATPase F subunit family. Has multiple subunits with at least A(3), B(3), C, D, E, F, H, I and proteolipid K(x).

The protein resides in the cell membrane. Functionally, component of the A-type ATP synthase that produces ATP from ADP in the presence of a proton gradient across the membrane. The sequence is that of A-type ATP synthase subunit F from Haloferax volcanii (strain ATCC 29605 / DSM 3757 / JCM 8879 / NBRC 14742 / NCIMB 2012 / VKM B-1768 / DS2) (Halobacterium volcanii).